The primary structure comprises 88 residues: Large ribosomal subunit protein eL31 (88 aa).

This sequence belongs to the eukaryotic ribosomal protein eL31 family.

This is Large ribosomal subunit protein eL31 from Methanoregula boonei (strain DSM 21154 / JCM 14090 / 6A8).